Here is a 257-residue protein sequence, read N- to C-terminus: Imidazole glycerol phosphate synthase subunit HisF (257 aa).

Catalysis depends on residues Asp11 and Asp130.

It belongs to the HisA/HisF family. In terms of assembly, heterodimer of HisH and HisF.

The protein localises to the cytoplasm. It catalyses the reaction 5-[(5-phospho-1-deoxy-D-ribulos-1-ylimino)methylamino]-1-(5-phospho-beta-D-ribosyl)imidazole-4-carboxamide + L-glutamine = D-erythro-1-(imidazol-4-yl)glycerol 3-phosphate + 5-amino-1-(5-phospho-beta-D-ribosyl)imidazole-4-carboxamide + L-glutamate + H(+). The protein operates within amino-acid biosynthesis; L-histidine biosynthesis; L-histidine from 5-phospho-alpha-D-ribose 1-diphosphate: step 5/9. IGPS catalyzes the conversion of PRFAR and glutamine to IGP, AICAR and glutamate. The HisF subunit catalyzes the cyclization activity that produces IGP and AICAR from PRFAR using the ammonia provided by the HisH subunit. In Photobacterium profundum (strain SS9), this protein is Imidazole glycerol phosphate synthase subunit HisF.